The primary structure comprises 206 residues: MEYRLKAYYREGEKPSALRRAGKLPGLMYNRHLNRKVYVDLVEFDKVFRQASIHHVIVLELPDGQSLPTLVRQVNLDKRRRRPEHVDFFVLSDEPVEMYVPLRFVGTPAGVRAGGVLQEIHRDILVKVSPRNIPEFIEVDVSGLEIGDSLHASDLKLPPGVELAVSPEETIAAVVPPEDVEKLAEEAAAEVAEPEVIKKGKEEEEE.

Residues 1-91 (MEYRLKAYYR…RPEHVDFFVL (91 aa)) form a bL25 domain region. Residues 92–206 (SDEPVEMYVP…IKKGKEEEEE (115 aa)) form a CTC domain region. The interval 184–206 (AEEAAAEVAEPEVIKKGKEEEEE) is disordered. The segment covering 195–206 (EVIKKGKEEEEE) has biased composition (basic and acidic residues).

It belongs to the bacterial ribosomal protein bL25 family. CTC subfamily. In terms of assembly, part of the 50S ribosomal subunit. Contacts the 5S rRNA.

This is one of 3 proteins that mediate the attachment of the 5S rRNA onto the large ribosomal subunit. The sequence is that of Large ribosomal subunit protein bL25 (rplY) from Thermus thermophilus.